Reading from the N-terminus, the 77-residue chain is Protein IDA (77 aa).

Residues 1–26 form the signal peptide; the sequence is MAPCRTMMVLLCFVLFLAASSSCVAA. Positions 56-69 are RLK5-binding; sequence GVPIPPSAPSKRHN.

Interaction with RLK5. As to expression, expressed specifically in the floral abscission zone.

The protein localises to the secreted. Its subcellular location is the extracellular space. Functionally, involved in an ethylene-independent separation step of floral abscission. Promotes abscission zone (AZ) cells rounding. May act with RLK5 and HSL2 as ligand-receptor pairs. The sequence is that of Protein IDA from Arabidopsis thaliana (Mouse-ear cress).